Consider the following 331-residue polypeptide: Ketol-acid reductoisomerase (NADP(+)) (331 aa).

The KARI N-terminal Rossmann domain occupies 1-182; sequence MATLYYDTDA…GGTRAGILET (182 aa). NADP(+) is bound by residues 25 to 28, S51, S53, and 83 to 86; these read YGSQ and DEFQ. The active site involves H108. G134 contributes to the NADP(+) binding site. Residues 183-328 enclose the KARI C-terminal knotted domain; it reads NFKEETETDL…KGLRAMFSWL (146 aa). Positions 191, 195, 227, and 231 each coordinate Mg(2+). S252 lines the substrate pocket.

This sequence belongs to the ketol-acid reductoisomerase family. Mg(2+) is required as a cofactor.

The enzyme catalyses (2R)-2,3-dihydroxy-3-methylbutanoate + NADP(+) = (2S)-2-acetolactate + NADPH + H(+). It carries out the reaction (2R,3R)-2,3-dihydroxy-3-methylpentanoate + NADP(+) = (S)-2-ethyl-2-hydroxy-3-oxobutanoate + NADPH + H(+). Its pathway is amino-acid biosynthesis; L-isoleucine biosynthesis; L-isoleucine from 2-oxobutanoate: step 2/4. The protein operates within amino-acid biosynthesis; L-valine biosynthesis; L-valine from pyruvate: step 2/4. Its function is as follows. Involved in the biosynthesis of branched-chain amino acids (BCAA). Catalyzes an alkyl-migration followed by a ketol-acid reduction of (S)-2-acetolactate (S2AL) to yield (R)-2,3-dihydroxy-isovalerate. In the isomerase reaction, S2AL is rearranged via a Mg-dependent methyl migration to produce 3-hydroxy-3-methyl-2-ketobutyrate (HMKB). In the reductase reaction, this 2-ketoacid undergoes a metal-dependent reduction by NADPH to yield (R)-2,3-dihydroxy-isovalerate. This is Ketol-acid reductoisomerase (NADP(+)) from Synechococcus sp. (strain RCC307).